The primary structure comprises 813 residues: MAAPAFPPFRLRFATAATLLGMLGLAGCQTGGYQDSVPPTSGVQPLKGLAQNVSVRRNAMGAPLIESSSFHDALFSLGYVHAGDRIEQMVAMRLLAQGRLAELAGSEALDIDRLMRAANLKQSAAQQYADASPRLKRFFEVYARGVNAYLFRYRDKLPAGLASSGYRPEYWKPEDSALIFCLYAFSQSVNLQEELSALTLAQKAGSDKLAWLLPGAPDEPLAEMEVDKLKGLNLASQLPGLPALAAASQKLADLDLLGSPGSANLALGPQRSRSGKSLLASDSRAAWALSPVQINTSKYQVAGLSLPGLPIVLAGYNGKLAWSSSAVMADNQDLFLEQLRRQGSQLSYLADGKWLPARARSETYFVRGQRPVREVMYDTRHGTLLAQPENASLGLALNLPQFKGDRSLDALFDLTRAKNVERAFDSTREVTAAAVNFVFAEPEHIGWQVSGRYPNRREGQGLLPSPGWDGRYDWDGYADPMLHPYDQDPPAGWIGHANQRSLPRGYGMQLSSTWYYPERAERLAQLAGNGRHDSRSLMALQNDQVTLLANKLKQMFDAPGMAQPLKQAIDALPAGQRDKARDTLARLKAFDGRLSPVSADAALYELFLQEVARQTFLDDLGPESGPAWQAFVGNARLSFSAQADHLLGRDDSPFWDDRNTPQKEDKPAILARSLAGAMEAGIAQLGADRRTWQWGKLHQYRWPAPAYHGLGDAISRSPLAAGGDFTTLALTPFAWGSDFDTHLPASARMIVDFGQAEPLQILTSSGQSGNPASAHYRDGLDAWFKGRFMSLPLQQQNFGRAYGNQRLTLVPGR.

Positions 1-26 are cleaved as a signal peptide; sequence MAAPAFPPFRLRFATAATLLGMLGLA. The Nucleophile role is filled by Ser-262.

It belongs to the peptidase S45 family. Heterodimer of an alpha subunit and a beta subunit processed from the same precursor.

It is found in the periplasm. The enzyme catalyses an N-acyl-L-homoserine lactone + H2O = L-homoserine lactone + a carboxylate. Catalyzes the deacylation of acyl-homoserine lactone (AHL or acyl-HSL), releasing homoserine lactone (HSL) and the corresponding fatty acid. Possesses a specificity for the degradation of long-chain acyl-HSLs (side chains of seven or more carbons in length). The sequence is that of Acyl-homoserine lactone acylase QuiP (quiP) from Pseudomonas putida (strain ATCC 47054 / DSM 6125 / CFBP 8728 / NCIMB 11950 / KT2440).